The sequence spans 1148 residues: Replication factor C subunit 1 (1148 aa).

The span at 46–56 shows a compositional bias: basic and acidic residues; the sequence is NSSRKEDDFKQ. 2 disordered regions span residues 46–201 and 228–380; these read NSSR…LNDE and TLAM…TNYQ. Lys50 participates in a covalent cross-link: Glycyl lysine isopeptide (Lys-Gly) (interchain with G-Cter in SUMO2). Tyr67 carries the post-translational modification Phosphotyrosine. 4 positions are modified to phosphoserine: Ser69, Ser71, Ser73, and Ser108. Thr110 is subject to Phosphothreonine. Residues 130 to 141 show a composition bias toward polar residues; sequence RSTNSHLGTSNM. A Phosphoserine modification is found at Ser156. 2 positions are modified to phosphothreonine: Thr161 and Thr163. Phosphoserine is present on residues Ser164, Ser173, and Ser190. The segment covering 234–246 has biased composition (basic and acidic residues); it reads EEPKTKKARKDTE. Ser253 is subject to Phosphoserine. Residues 262-271 show a composition bias toward basic residues; sequence EKHKYPHKVK. A phosphoserine mark is found at Ser281 and Ser283. Over residues 288–308 the composition is skewed to basic and acidic residues; that stretch reads SKYESSKESQQHSKSSADKIG. Ser312 carries the phosphoserine modification. Composition is skewed to basic and acidic residues over residues 323–353 and 362–376; these read KRKE…ETKT and AKKE…EKKR. Ser368 carries the phosphoserine modification. One can recognise a BRCT domain in the interval 402–492; sequence GAENCLEGLI…PGKKSKYEIA (91 aa). Composition is skewed to basic and acidic residues over residues 496–507 and 520–538; these read EMKKESKLERTP and SKKE…RDSL. Residues 496–538 form a disordered region; that stretch reads EMKKESKLERTPQKNVQGKRKISPSKKESESKKSRPTSKRDSL. The residue at position 537 (Ser537) is a Phosphoserine. Residue 650-657 participates in ATP binding; sequence SGPPGVGK. Residues 1081–1148 are disordered; sequence KASRHSTSPS…RKGKGKSSKK (68 aa). A compositionally biased stretch (acidic residues) spans 1094-1105; the sequence is EYNEELNEDDSQ. A phosphoserine mark is found at Ser1104 and Ser1106. The Nuclear localization signal signature appears at 1120–1124; the sequence is IKKKT. A compositionally biased stretch (basic and acidic residues) spans 1130-1140; sequence SKPEKDKEPRK.

This sequence belongs to the activator 1 large subunit family. As to quaternary structure, large subunit of the RFC complex, an heteropentameric complex consisting of RFC1 and four small subunits RFC2, RFC3, RFC4 and RFC5; the RFC complex interacts with PCNA and the interaction involves RFC1. In terms of tissue distribution, wide tissue distribution. Undetectable in placental tissue.

Its subcellular location is the nucleus. In terms of biological role, subunit of the replication factor C (RFC) complex which acts during elongation of primed DNA templates by DNA polymerases delta and epsilon, and is necessary for ATP-dependent loading of proliferating cell nuclear antigen (PCNA) onto primed DNA. This subunit binds to the primer-template junction. Binds the PO-B transcription element as well as other GA rich DNA sequences. Can bind single- or double-stranded DNA. The chain is Replication factor C subunit 1 (RFC1) from Homo sapiens (Human).